A 186-amino-acid polypeptide reads, in one-letter code: MTTTPLSNLFLRAPDITHVAPPYCLNATWQAENALHTTKTDPACLAARSYLVRASCSTSGPIHCFFFAVYKDSQHSLPLVTELRNFADLVNHPPVLRELEDKRGGRLRCTGPFSCGTIKDVSGASPAGEYTINGIVYHCHCRYPFSKTCWLGASAALQHLRSISSSGTAARAAEQRRHKIKIKIKV.

Belongs to the alphaherpesvirinae HHV-1 UL55 family.

The protein resides in the virion tegument. The protein localises to the host nucleus matrix. This Human herpesvirus 2 (strain HG52) (HHV-2) protein is Tegument protein UL55.